The sequence spans 689 residues: Glycine--tRNA ligase beta subunit (689 aa).

Belongs to the class-II aminoacyl-tRNA synthetase family. Tetramer of two alpha and two beta subunits.

The protein localises to the cytoplasm. It catalyses the reaction tRNA(Gly) + glycine + ATP = glycyl-tRNA(Gly) + AMP + diphosphate. The chain is Glycine--tRNA ligase beta subunit from Yersinia pseudotuberculosis serotype O:1b (strain IP 31758).